Reading from the N-terminus, the 350-residue chain is S-adenosylmethionine:tRNA ribosyltransferase-isomerase (350 aa).

Belongs to the QueA family. As to quaternary structure, monomer.

It is found in the cytoplasm. The catalysed reaction is 7-aminomethyl-7-carbaguanosine(34) in tRNA + S-adenosyl-L-methionine = epoxyqueuosine(34) in tRNA + adenine + L-methionine + 2 H(+). It functions in the pathway tRNA modification; tRNA-queuosine biosynthesis. Functionally, transfers and isomerizes the ribose moiety from AdoMet to the 7-aminomethyl group of 7-deazaguanine (preQ1-tRNA) to give epoxyqueuosine (oQ-tRNA). This chain is S-adenosylmethionine:tRNA ribosyltransferase-isomerase, found in Bacillus cereus (strain 03BB102).